Here is a 282-residue protein sequence, read N- to C-terminus: 2-dehydro-3-deoxyphosphooctonate aldolase (282 aa).

Belongs to the KdsA family.

The protein resides in the cytoplasm. The catalysed reaction is D-arabinose 5-phosphate + phosphoenolpyruvate + H2O = 3-deoxy-alpha-D-manno-2-octulosonate-8-phosphate + phosphate. Its pathway is carbohydrate biosynthesis; 3-deoxy-D-manno-octulosonate biosynthesis; 3-deoxy-D-manno-octulosonate from D-ribulose 5-phosphate: step 2/3. It participates in bacterial outer membrane biogenesis; lipopolysaccharide biosynthesis. The chain is 2-dehydro-3-deoxyphosphooctonate aldolase from Shewanella sp. (strain ANA-3).